Reading from the N-terminus, the 288-residue chain is Acetyl-coenzyme A carboxylase carboxyl transferase subunit beta (288 aa).

One can recognise a CoA carboxyltransferase N-terminal domain in the interval 34–288 (LFSKCPACKV…RLLRMHGGVR (255 aa)). 4 residues coordinate Zn(2+): C38, C41, C56, and C59. A C4-type zinc finger spans residues 38-59 (CPACKVILYKNDLGLEKTCQHC).

The protein belongs to the AccD/PCCB family. Acetyl-CoA carboxylase is a heterohexamer composed of biotin carboxyl carrier protein (AccB), biotin carboxylase (AccC) and two subunits each of ACCase subunit alpha (AccA) and ACCase subunit beta (AccD). It depends on Zn(2+) as a cofactor.

The protein resides in the cytoplasm. It carries out the reaction N(6)-carboxybiotinyl-L-lysyl-[protein] + acetyl-CoA = N(6)-biotinyl-L-lysyl-[protein] + malonyl-CoA. The protein operates within lipid metabolism; malonyl-CoA biosynthesis; malonyl-CoA from acetyl-CoA: step 1/1. In terms of biological role, component of the acetyl coenzyme A carboxylase (ACC) complex. Biotin carboxylase (BC) catalyzes the carboxylation of biotin on its carrier protein (BCCP) and then the CO(2) group is transferred by the transcarboxylase to acetyl-CoA to form malonyl-CoA. In Streptococcus suis (strain 98HAH33), this protein is Acetyl-coenzyme A carboxylase carboxyl transferase subunit beta.